Here is a 169-residue protein sequence, read N- to C-terminus: Putative outer membrane protein BBA03 (169 aa).

Its subcellular location is the cell outer membrane. This Borreliella burgdorferi (strain ATCC 35210 / DSM 4680 / CIP 102532 / B31) (Borrelia burgdorferi) protein is Putative outer membrane protein BBA03.